The sequence spans 157 residues: Ribosomal RNA large subunit methyltransferase H (157 aa).

S-adenosyl-L-methionine contacts are provided by residues L73, G105, and 124 to 129 (LSKMTF).

This sequence belongs to the RNA methyltransferase RlmH family. Homodimer.

The protein resides in the cytoplasm. It carries out the reaction pseudouridine(1915) in 23S rRNA + S-adenosyl-L-methionine = N(3)-methylpseudouridine(1915) in 23S rRNA + S-adenosyl-L-homocysteine + H(+). Its function is as follows. Specifically methylates the pseudouridine at position 1915 (m3Psi1915) in 23S rRNA. This chain is Ribosomal RNA large subunit methyltransferase H, found in Parabacteroides distasonis (strain ATCC 8503 / DSM 20701 / CIP 104284 / JCM 5825 / NCTC 11152).